Here is a 231-residue protein sequence, read N- to C-terminus: Orotidine 5'-phosphate decarboxylase (231 aa).

Residues aspartate 11, lysine 34, 61-70, threonine 117, arginine 179, glutamine 188, glycine 208, and arginine 209 each bind substrate; that span reads DLKLHDIPNT. Lysine 63 serves as the catalytic Proton donor.

It belongs to the OMP decarboxylase family. Type 1 subfamily. In terms of assembly, homodimer.

The enzyme catalyses orotidine 5'-phosphate + H(+) = UMP + CO2. It participates in pyrimidine metabolism; UMP biosynthesis via de novo pathway; UMP from orotate: step 2/2. Its function is as follows. Catalyzes the decarboxylation of orotidine 5'-monophosphate (OMP) to uridine 5'-monophosphate (UMP). This Streptococcus thermophilus (strain CNRZ 1066) protein is Orotidine 5'-phosphate decarboxylase.